The chain runs to 447 residues: DNA primase DnaG (447 aa).

The 75-residue stretch at 200-274 folds into the Toprim domain; sequence DSIIVVEGRA…DIDYVARAPE (75 aa). The Mg(2+) site is built by Glu206, Asp248, and Asp250.

It belongs to the archaeal DnaG primase family. In terms of assembly, forms a ternary complex with MCM helicase and DNA. Component of the archaeal exosome complex. Mg(2+) is required as a cofactor.

The enzyme catalyses ssDNA + n NTP = ssDNA/pppN(pN)n-1 hybrid + (n-1) diphosphate.. RNA polymerase that catalyzes the synthesis of short RNA molecules used as primers for DNA polymerase during DNA replication. Also part of the exosome, which is a complex involved in RNA degradation. Acts as a poly(A)-binding protein that enhances the interaction between heteromeric, adenine-rich transcripts and the exosome. In Pyrococcus abyssi (strain GE5 / Orsay), this protein is DNA primase DnaG.